A 324-amino-acid chain; its full sequence is NAD(P)H-dependent D-xylose reductase I,II (324 aa).

Catalysis depends on Tyr-54, which acts as the Proton donor. A substrate-binding site is contributed by His-116. NAD(+) is bound by residues 171-172, 220-229, and 276-286; these read SN, SSFGPQSFLE, and KSNNPERLAQN.

Belongs to the aldo/keto reductase family.

The enzyme catalyses xylitol + NAD(+) = D-xylose + NADH + H(+). The catalysed reaction is xylitol + NADP(+) = D-xylose + NADPH + H(+). Its pathway is carbohydrate metabolism; D-xylose degradation. Its function is as follows. Reduces D-xylose into xylitol. Has a preference for NADPH, but can also utilize NADH as cosubstrate. The protein is NAD(P)H-dependent D-xylose reductase I,II (xyrA) of Candida tropicalis (Yeast).